The chain runs to 321 residues: uncharacterized protein (321 aa).

Residues 1–5 lie on the Cytoplasmic side of the membrane; it reads MKQQA. Residues 6–26 traverse the membrane as a helical segment; the sequence is GIGILLALTTAICWGALPIAM. The region spanning 17 to 144 is the EamA 1 domain; sequence ICWGALPIAM…LLSGLVMFFN (128 aa). Residues 27–35 are Periplasmic-facing; it reads KQVLEVMEP. A helical membrane pass occupies residues 36 to 56; sequence PTIVFYRFLMASIGLGAILAV. The Cytoplasmic segment spans residues 57–70; that stretch reads KKRLPPLRVFRKPR. Residues 71 to 91 form a helical membrane-spanning segment; sequence WLILLAVATAGLFGNFILFSS. Over 92–99 the chain is Periplasmic; that stretch reads SLQYLSPT. Residues 100-120 form a helical membrane-spanning segment; that stretch reads ASQVIGQLSPVGMMVASVFIL. The Cytoplasmic segment spans residues 121 to 130; the sequence is KEKMRSTQVV. Residues 131-151 form a helical membrane-spanning segment; that stretch reads GALMLLSGLVMFFNTSLVEIF. The Periplasmic portion of the chain corresponds to 152–156; it reads TKLTD. A helical membrane pass occupies residues 157–177; that stretch reads YTWGVIFGVGAATVWVSYGVA. The 124-residue stretch at 169-292 folds into the EamA 2 domain; that stretch reads TVWVSYGVAQ…GYLGAFVVVA (124 aa). The Cytoplasmic portion of the chain corresponds to 178 to 190; that stretch reads QKVLLRRLASPQI. Residues 191–211 traverse the membrane as a helical segment; the sequence is LFLLYTLCTIALFPLAKPGVI. At 212–216 the chain is on the periplasmic side; it reads AQLSH. Residues 217-237 form a helical membrane-spanning segment; it reads WQLACLIFCGLNTLVGYGALA. At 238–249 the chain is on the cytoplasmic side; the sequence is EAMARWQAAQVS. The chain crosses the membrane as a helical span at residues 250-270; sequence AIITLTPLFTLFFSDLLSLAW. Topologically, residues 271 to 278 are periplasmic; sequence PDFFARPM. A helical membrane pass occupies residues 279–299; that stretch reads LNLLGYLGAFVVVAGAMYSAI. The Cytoplasmic portion of the chain corresponds to 300 to 321; it reads GHRIWGGLRKHTTVVSQPRAGE.

This sequence belongs to the EamA transporter family.

It is found in the cell inner membrane. This is an uncharacterized protein from Escherichia coli O157:H7.